Here is a 287-residue protein sequence, read N- to C-terminus: Probable 3-hydroxybutyryl-CoA dehydrogenase (287 aa).

It belongs to the 3-hydroxyacyl-CoA dehydrogenase family.

The enzyme catalyses (3S)-3-hydroxybutanoyl-CoA + NADP(+) = acetoacetyl-CoA + NADPH + H(+). It functions in the pathway lipid metabolism; butanoate metabolism. This is Probable 3-hydroxybutyryl-CoA dehydrogenase (mmgB) from Bacillus subtilis (strain 168).